The chain runs to 284 residues: Dihydropteroate synthase (284 aa).

The Pterin-binding domain occupies 6–265 (VQVIGVLNVT…DVRASVDALK (260 aa)). Asn13 contacts Mg(2+). Residues Thr53, Asp86, Asn105, Asp177, Lys213, and 253–255 (RVH) each bind (7,8-dihydropterin-6-yl)methyl diphosphate.

This sequence belongs to the DHPS family. Homodimer. Mg(2+) serves as cofactor.

The catalysed reaction is (7,8-dihydropterin-6-yl)methyl diphosphate + 4-aminobenzoate = 7,8-dihydropteroate + diphosphate. The protein operates within cofactor biosynthesis; tetrahydrofolate biosynthesis; 7,8-dihydrofolate from 2-amino-4-hydroxy-6-hydroxymethyl-7,8-dihydropteridine diphosphate and 4-aminobenzoate: step 1/2. Is potently inhibited by the sulfone dapsone and the two sulfonamides sulfamethoxazole and sulfamethoxypyridazine, with Kis in the range of 12 to 32 nM. To a lesser extent, is also inhibited by p-aminosalicylate (PAS). Its function is as follows. Catalyzes the condensation of para-aminobenzoate (pABA) with 6-hydroxymethyl-7,8-dihydropterin diphosphate (DHPt-PP) to form 7,8-dihydropteroate, the immediate precursor of folate derivatives. This Mycobacterium leprae (strain TN) protein is Dihydropteroate synthase (folP1).